A 54-amino-acid chain; its full sequence is Large ribosomal subunit protein bL32c (54 aa).

Belongs to the bacterial ribosomal protein bL32 family.

The protein localises to the plastid. Its subcellular location is the chloroplast. This Gossypium barbadense (Sea Island cotton) protein is Large ribosomal subunit protein bL32c.